The chain runs to 181 residues: SecB-like chaperone MT2006 (181 aa).

This sequence belongs to the SecB-like family. As to quaternary structure, homotetramer, interacts with antitoxin HigA1.

In terms of biological role, chaperone component of an atypical, type II toxin-antitoxin chaperone (TAC) module, probably required for antitoxin HigA1 to neutralize its cognate toxin HigB1. The polypeptide is SecB-like chaperone MT2006 (secBL) (Mycobacterium tuberculosis (strain CDC 1551 / Oshkosh)).